Here is a 130-residue protein sequence, read N- to C-terminus: Fluoride-specific ion channel FluC (130 aa).

The next 4 helical transmembrane spans lie at 4-24 (MINVVAVGTGGFVGAASRYFI), 35-55 (GFPIATLIINILGSFLIGLLT), 68-88 (LNLFLTTGILGGFTTFSTFSL), and 99-119 (AVFGVVNIVLSIAFCLTGVVL). Positions 78 and 81 each coordinate Na(+).

It belongs to the fluoride channel Fluc/FEX (TC 1.A.43) family.

Its subcellular location is the cell membrane. It carries out the reaction fluoride(in) = fluoride(out). With respect to regulation, na(+) is not transported, but it plays an essential structural role and its presence is essential for fluoride channel function. Functionally, fluoride-specific ion channel. Important for reducing fluoride concentration in the cell, thus reducing its toxicity. The chain is Fluoride-specific ion channel FluC from Ruminiclostridium cellulolyticum (strain ATCC 35319 / DSM 5812 / JCM 6584 / H10) (Clostridium cellulolyticum).